A 779-amino-acid polypeptide reads, in one-letter code: Probable ATP-dependent RNA helicase DHX40 (779 aa).

The tract at residues 1-28 (MSRFPAVAGRAPRRQEEGERSRDLQEER) is disordered. The segment covering 13 to 28 (RRQEEGERSRDLQEER) has biased composition (basic and acidic residues). In terms of domain architecture, Helicase ATP-binding spans 63–231 (IQAVRDNSFL…FGNCPIFDIP (169 aa)). 76–83 (GNTGSGKT) lines the ATP pocket. The DEAH box signature appears at 173–176 (DEAH). One can recognise a Helicase C-terminal domain in the interval 263 to 442 (TMDIHLNEMA…SVVLTLKCLA (180 aa)). The segment at 737–779 (SKDVLKKMQRRNDDKSISDARARFLERKQQRTQDHSDTRKETG) is disordered.

This sequence belongs to the DEAD box helicase family. DEAH subfamily. Ubiquitously expressed.

It carries out the reaction ATP + H2O = ADP + phosphate + H(+). In terms of biological role, probable ATP-dependent RNA helicase. In Homo sapiens (Human), this protein is Probable ATP-dependent RNA helicase DHX40 (DHX40).